The chain runs to 1103 residues: Voltage-dependent calcium channel subunit alpha-2/delta-1 (1103 aa).

The signal sequence occupies residues 1-24 (MAAGCLLALTLTLFQSGLIGPSSE). Topologically, residues 25–1073 (EPFPSPVTIK…VLEDYTDCGG (1049 aa)) are extracellular. A glycan (N-linked (GlcNAc...) asparagine) is linked at Asn92. Ser119 carries the post-translational modification Phosphoserine. N-linked (GlcNAc...) asparagine glycans are attached at residues Asn136 and Asn184. A VWFA domain is found at 253 to 430 (DMLILVDVSG…INTQEYLDVL (178 aa)). Positions 259, 261, and 263 each coordinate a divalent metal cation. The MIDAS-like motif signature appears at 259–263 (DVSGS). N-linked (GlcNAc...) asparagine glycosylation is found at Asn324 and Asn348. The cysteines at positions 404 and 1059 are disulfide-linked. The region spanning 446 to 537 (WTNVYLDALE…QPKPIGVGIP (92 aa)) is the Cache domain. 3 N-linked (GlcNAc...) asparagine glycosylation sites follow: Asn613, Asn781, and Asn888. A helical membrane pass occupies residues 1074 to 1094 (VSGLNPSLWSIFGLQFILLWL). Topologically, residues 1095 to 1103 (VSGSRHYLL) are cytoplasmic.

It belongs to the calcium channel subunit alpha-2/delta family. As to quaternary structure, dimer formed of alpha-2-1 and delta-1 chains; disulfide-linked. Voltage-dependent calcium channels are multisubunit complexes, consisting of alpha-1 (CACNA1), alpha-2 (CACNA2D), beta (CACNB) and delta (CACNA2D) subunits in a 1:1:1:1 ratio. In terms of processing, proteolytically processed into subunits alpha-2-1 and delta-1 that are disulfide-linked. In terms of tissue distribution, isoform 2A is expressed in skeletal muscle and aorta. Isoform 2B is expressed in brain. Isoform 2C is expressed in heart. Isoform 2D is expressed in heart and smooth muscle. Isoform 2E is expressed in smooth muscle. All five isoforms are expressed in the cardiovascular system.

It is found in the membrane. The protein resides in the cell membrane. In terms of biological role, the alpha-2/delta subunit of voltage-dependent calcium channels regulates calcium current density and activation/inactivation kinetics of the calcium channel. Plays an important role in excitation-contraction coupling. The sequence is that of Voltage-dependent calcium channel subunit alpha-2/delta-1 (Cacna2d1) from Mus musculus (Mouse).